The chain runs to 294 residues: Acetyl-coenzyme A carboxylase carboxyl transferase subunit beta (294 aa).

The 268-residue stretch at 27–294 (LWHKCPSCDA…PSPVALPVTA (268 aa)) folds into the CoA carboxyltransferase N-terminal domain. Residues cysteine 31, cysteine 34, cysteine 50, and cysteine 53 each coordinate Zn(2+). A C4-type zinc finger spans residues 31-53 (CPSCDAVLYRPELEKTLDVCPKC).

This sequence belongs to the AccD/PCCB family. As to quaternary structure, acetyl-CoA carboxylase is a heterohexamer composed of biotin carboxyl carrier protein (AccB), biotin carboxylase (AccC) and two subunits each of ACCase subunit alpha (AccA) and ACCase subunit beta (AccD). Requires Zn(2+) as cofactor.

Its subcellular location is the cytoplasm. It carries out the reaction N(6)-carboxybiotinyl-L-lysyl-[protein] + acetyl-CoA = N(6)-biotinyl-L-lysyl-[protein] + malonyl-CoA. It functions in the pathway lipid metabolism; malonyl-CoA biosynthesis; malonyl-CoA from acetyl-CoA: step 1/1. Its function is as follows. Component of the acetyl coenzyme A carboxylase (ACC) complex. Biotin carboxylase (BC) catalyzes the carboxylation of biotin on its carrier protein (BCCP) and then the CO(2) group is transferred by the transcarboxylase to acetyl-CoA to form malonyl-CoA. This is Acetyl-coenzyme A carboxylase carboxyl transferase subunit beta from Ectopseudomonas mendocina (strain ymp) (Pseudomonas mendocina).